The chain runs to 338 residues: Phosphoribosylformylglycinamidine cyclo-ligase (338 aa).

It belongs to the AIR synthase family.

The protein localises to the cytoplasm. The enzyme catalyses 2-formamido-N(1)-(5-O-phospho-beta-D-ribosyl)acetamidine + ATP = 5-amino-1-(5-phospho-beta-D-ribosyl)imidazole + ADP + phosphate + H(+). The protein operates within purine metabolism; IMP biosynthesis via de novo pathway; 5-amino-1-(5-phospho-D-ribosyl)imidazole from N(2)-formyl-N(1)-(5-phospho-D-ribosyl)glycinamide: step 2/2. This Thermoplasma acidophilum (strain ATCC 25905 / DSM 1728 / JCM 9062 / NBRC 15155 / AMRC-C165) protein is Phosphoribosylformylglycinamidine cyclo-ligase.